A 203-amino-acid polypeptide reads, in one-letter code: Ribosome maturation factor RimP (203 aa).

Residues 183-203 (FDDIETEGSAEGTTGSEEENK) are disordered.

The protein belongs to the RimP family.

It is found in the cytoplasm. In terms of biological role, required for maturation of 30S ribosomal subunits. In Ruegeria sp. (strain TM1040) (Silicibacter sp.), this protein is Ribosome maturation factor RimP.